Consider the following 622-residue polypeptide: Low affinity potassium transport system protein Kup (622 aa).

A run of 12 helical transmembrane segments spans residues 12 to 32 (ITLAAIGVVYGDIGTSPLYTL), 49 to 69 (VFGFLSLIFWLLILVVSLKYL), 101 to 121 (FLVIIGLIGGSFFYGEVVITP), 134 to 154 (IIAPQLDTWVVPLAIIVLTLL), 163 to 183 (GLVGKLFAPIMLAWFLILAAL), 213 to 233 (VSFVALGAVVLSITGVEALYA), 247 to 267 (WFTVVLPSLVLNYFGQGALLL), 276 to 296 (PFFLLAPDWALVPMLIIATLA), 337 to 357 (IYIPFINWLLYVAVVIVIVSF), 363 to 383 (LAAAYGIAVTGTMVLTSILST), 395 to 415 (FLVALILVGLLCIDLPLFSAN), and 419 to 439 (IVSGGWLPLTLGLVMFIVMTT).

It belongs to the HAK/KUP transporter (TC 2.A.72) family.

Its subcellular location is the cell inner membrane. It catalyses the reaction K(+)(in) + H(+)(in) = K(+)(out) + H(+)(out). Functionally, responsible for the low-affinity transport of potassium into the cell. Likely operates as a K(+):H(+) symporter. The polypeptide is Low affinity potassium transport system protein Kup (Enterobacter sp. (strain 638)).